The sequence spans 201 residues: Urease accessory protein UreG (201 aa).

A GTP-binding site is contributed by 12–19; sequence GPVGSGKT.

The protein belongs to the SIMIBI class G3E GTPase family. UreG subfamily. As to quaternary structure, homodimer. UreD, UreF and UreG form a complex that acts as a GTP-hydrolysis-dependent molecular chaperone, activating the urease apoprotein by helping to assemble the nickel containing metallocenter of UreC. The UreE protein probably delivers the nickel.

It localises to the cytoplasm. In terms of biological role, facilitates the functional incorporation of the urease nickel metallocenter. This process requires GTP hydrolysis, probably effectuated by UreG. The sequence is that of Urease accessory protein UreG from Dechloromonas aromatica (strain RCB).